Consider the following 80-residue polypeptide: FXYD domain-containing ion transport regulator 7 (80 aa).

Over 1-22 (MATPTQSPTNVPEETDPFFYDY) the chain is Extracellular. O-linked (GlcNAc) threonine glycans are attached at residues Thr3, Thr5, and Thr9. The chain crosses the membrane as a helical span at residues 23–45 (ATVQTVGMTLATIMFVLGIIIIL). Residues 46-80 (SKKVKCRKADSRSESPTCKSCKSELPSSAPGGGGV) lie on the Cytoplasmic side of the membrane. The segment at 55–80 (DSRSESPTCKSCKSELPSSAPGGGGV) is disordered. Ser73 carries the post-translational modification Phosphoserine.

The protein belongs to the FXYD family. As to quaternary structure, regulatory subunit of the sodium/potassium-transporting ATPase which is composed of a catalytic alpha subunit, a non-catalytic beta subunit and an additional regulatory subunit. The regulatory subunit, a member of the FXYD protein family, modulates the enzymatic activity in a tissue- and isoform-specific way by changing affinities of the Na+/K+-ATPase toward Na(+), K(+) or ATP. O-glycosylated; required for stabilization and translocation to the plasma membrane.

The protein localises to the cell membrane. Associates with and regulates the activity of the sodium/potassium-transporting ATPase (NKA) which catalyzes the hydrolysis of ATP coupled with the exchange of Na(+) and K(+) ions across the plasma membrane. Reduces the apparent affinity for external K(+), an effect that depends on the presence of external Na(+) and voltage. Increases the apparent affinity for intracellular Na(+). This chain is FXYD domain-containing ion transport regulator 7 (Fxyd7), found in Mus musculus (Mouse).